Consider the following 215-residue polypeptide: ATP-dependent dethiobiotin synthetase BioD (215 aa).

ATP is bound at residue 13-18; it reads DIGKTV. Thr17 is a Mg(2+) binding site. Residue Lys38 is part of the active site. Thr42 contributes to the substrate binding site. Residues Asp50, 115–118, and 175–176 contribute to the ATP site; these read EGAG and NH. 2 residues coordinate Mg(2+): Asp50 and Glu115.

Belongs to the dethiobiotin synthetase family. Homodimer. Mg(2+) is required as a cofactor.

It localises to the cytoplasm. The enzyme catalyses (7R,8S)-7,8-diammoniononanoate + CO2 + ATP = (4R,5S)-dethiobiotin + ADP + phosphate + 3 H(+). It functions in the pathway cofactor biosynthesis; biotin biosynthesis; biotin from 7,8-diaminononanoate: step 1/2. Functionally, catalyzes a mechanistically unusual reaction, the ATP-dependent insertion of CO2 between the N7 and N8 nitrogen atoms of 7,8-diaminopelargonic acid (DAPA, also called 7,8-diammoniononanoate) to form a ureido ring. In Neisseria gonorrhoeae (strain NCCP11945), this protein is ATP-dependent dethiobiotin synthetase BioD.